Consider the following 396-residue polypeptide: 1-deoxy-D-xylulose 5-phosphate reductoisomerase (396 aa).

Positions 15, 16, 17, 18, 41, and 129 each coordinate NADPH. Lysine 130 contacts 1-deoxy-D-xylulose 5-phosphate. Glutamate 131 lines the NADPH pocket. A Mn(2+)-binding site is contributed by aspartate 155. Serine 156, glutamate 157, serine 182, and histidine 205 together coordinate 1-deoxy-D-xylulose 5-phosphate. Residue glutamate 157 participates in Mn(2+) binding. Glycine 211 contacts NADPH. Serine 218, asparagine 223, lysine 224, and glutamate 227 together coordinate 1-deoxy-D-xylulose 5-phosphate. Position 227 (glutamate 227) interacts with Mn(2+).

The protein belongs to the DXR family. The cofactor is Mg(2+). Mn(2+) is required as a cofactor.

The catalysed reaction is 2-C-methyl-D-erythritol 4-phosphate + NADP(+) = 1-deoxy-D-xylulose 5-phosphate + NADPH + H(+). The protein operates within isoprenoid biosynthesis; isopentenyl diphosphate biosynthesis via DXP pathway; isopentenyl diphosphate from 1-deoxy-D-xylulose 5-phosphate: step 1/6. Catalyzes the NADPH-dependent rearrangement and reduction of 1-deoxy-D-xylulose-5-phosphate (DXP) to 2-C-methyl-D-erythritol 4-phosphate (MEP). The protein is 1-deoxy-D-xylulose 5-phosphate reductoisomerase of Xanthomonas oryzae pv. oryzae (strain PXO99A).